Here is a 173-residue protein sequence, read N- to C-terminus: Protein-export protein SecB (173 aa).

The interval 148–173 (QQQKQRREQGTSDSAPSGSPDNGGRQ) is disordered. The span at 158 to 167 (TSDSAPSGSP) shows a compositional bias: polar residues.

Belongs to the SecB family. In terms of assembly, homotetramer, a dimer of dimers. One homotetramer interacts with 1 SecA dimer.

It is found in the cytoplasm. Its function is as follows. One of the proteins required for the normal export of preproteins out of the cell cytoplasm. It is a molecular chaperone that binds to a subset of precursor proteins, maintaining them in a translocation-competent state. It also specifically binds to its receptor SecA. The sequence is that of Protein-export protein SecB from Halorhodospira halophila (strain DSM 244 / SL1) (Ectothiorhodospira halophila (strain DSM 244 / SL1)).